We begin with the raw amino-acid sequence, 223 residues long: RNA-free ribonuclease P (223 aa).

This sequence belongs to the HARP family.

The enzyme catalyses Endonucleolytic cleavage of RNA, removing 5'-extranucleotides from tRNA precursor.. Its function is as follows. RNA-free RNase P that catalyzes the removal of the 5'-leader sequence from pre-tRNA to produce the mature 5'-terminus. The protein is RNA-free ribonuclease P of Methanococcus maripaludis (strain DSM 14266 / JCM 13030 / NBRC 101832 / S2 / LL).